The primary structure comprises 423 residues: uncharacterized protein (423 aa).

The segment at 383–423 is disordered; sequence ARGTTGGGGTRSGTSTDGQEDGRKPPVVVIREQPPPGNPPR.

It belongs to the mycobacterial PPE family.

This is an uncharacterized protein from Mycobacterium tuberculosis (strain CDC 1551 / Oshkosh).